A 556-amino-acid polypeptide reads, in one-letter code: CDP-diacylglycerol--glycerol-3-phosphate 3-phosphatidyltransferase, mitochondrial (556 aa).

A mitochondrion-targeting transit peptide spans 1-28 (MAVAAAAAAGPVFWRRLLGLLPGRPGLA). Residue serine 49 is modified to Phosphoserine. 124 to 131 (ASLYLGTG) is a binding site for ATP. PLD phosphodiesterase domains are found at residues 215 to 241 (TIGL…SDSY) and 460 to 493 (RGWT…GYRS). Active-site residues include histidine 220, lysine 222, and aspartate 227.

Belongs to the CDP-alcohol phosphatidyltransferase class-II family.

Its subcellular location is the mitochondrion. It catalyses the reaction a CDP-1,2-diacyl-sn-glycerol + sn-glycerol 3-phosphate = a 1,2-diacyl-sn-glycero-3-phospho-(1'-sn-glycero-3'-phosphate) + CMP + H(+). It participates in phospholipid metabolism; phosphatidylglycerol biosynthesis; phosphatidylglycerol from CDP-diacylglycerol: step 1/2. Its activity is regulated as follows. Activated by calcium and magnesium and inhibited by other bivalent cations. In terms of biological role, functions in the biosynthesis of the anionic phospholipids phosphatidylglycerol and cardiolipin. In Pongo abelii (Sumatran orangutan), this protein is CDP-diacylglycerol--glycerol-3-phosphate 3-phosphatidyltransferase, mitochondrial (PGS1).